A 635-amino-acid polypeptide reads, in one-letter code: Transcription termination factor FttA (635 aa).

KHa stretches follow at residues 1 to 69 (MSAE…PSVL) and 4 to 69 (EDIL…PSVL). The interval 70–137 (VEPDIAKDKI…WAPKPVRTPP (68 aa)) is KHb. Metallo-beta-lactamase N-terminus regions lie at residues 179–382 (WVRT…YGGY) and 179–383 (WVRT…GGYD). Beta-Casp regions lie at residues 180 to 577 (VRTS…GFSG) and 383 to 576 (DDVL…EGFS). Residues H241, H243, D245, H246, H328, and D351 each contribute to the Zn(2+) site. 2 metallo-beta-lactamase C-terminus regions span residues 577–635 (GHSD…IRLR) and 578–635 (HSDR…IRLR). Residue H602 participates in Zn(2+) binding.

The protein belongs to the metallo-beta-lactamase superfamily. RNA-metabolizing metallo-beta-lactamase-like family. FttA subfamily. In terms of assembly, homodimer. Interacts with RNA polymerase (RNAP); interaction is not dependent on DNA or RNA. Interacts with the Spt4-Spt5 complex. It depends on Zn(2+) as a cofactor.

It is found in the chromosome. Its function is as follows. Terminates transcription on the whole genome. Termination is linked to FttA-mediated RNA cleavage and does not require NTP hydrolysis. Cleaves endonucleolytically at the RNA exit channel of RNA polymerase (RNAP); the 5'-3' exonuclease activity of this protein degrades the nascent RNA released from RNAP. Terminates transcription genome-wide. Transcription termination is most effective in vivo on RNAs with more than one U4-tract in their 3'-ends (including non-protein coding RNAs); U4-tracts are recognized by this protein. Also plays a role in termination of RNAs without U-tracts by an unknown mechanism. Has endonuclease activity after U-rich tracts in transcription termination sites. Binds RNA at U4-tracts found directly upstream of the experimentally determined transcription termination sites; binds preferentially to RNAs with more U4-tracts at their 3'-ends. The chain is Transcription termination factor FttA from Methanococcus maripaludis (strain DSM 14266 / JCM 13030 / NBRC 101832 / S2 / LL).